A 513-amino-acid chain; its full sequence is Histidine ammonia-lyase (513 aa).

The 5-imidazolinone (Ala-Gly) cross-link spans 142–144; the sequence is ASG. S143 is modified (2,3-didehydroalanine (Ser)).

Belongs to the PAL/histidase family. Contains an active site 4-methylidene-imidazol-5-one (MIO), which is formed autocatalytically by cyclization and dehydration of residues Ala-Ser-Gly.

It localises to the cytoplasm. It carries out the reaction L-histidine = trans-urocanate + NH4(+). It functions in the pathway amino-acid degradation; L-histidine degradation into L-glutamate; N-formimidoyl-L-glutamate from L-histidine: step 1/3. The polypeptide is Histidine ammonia-lyase (Methylobacterium sp. (strain 4-46)).